Reading from the N-terminus, the 458-residue chain is UDP-N-acetylmuramoylalanine--D-glutamate ligase (458 aa).

An ATP-binding site is contributed by 119 to 125 (GSNGKTT).

Belongs to the MurCDEF family.

The protein localises to the cytoplasm. The catalysed reaction is UDP-N-acetyl-alpha-D-muramoyl-L-alanine + D-glutamate + ATP = UDP-N-acetyl-alpha-D-muramoyl-L-alanyl-D-glutamate + ADP + phosphate + H(+). Its pathway is cell wall biogenesis; peptidoglycan biosynthesis. Functionally, cell wall formation. Catalyzes the addition of glutamate to the nucleotide precursor UDP-N-acetylmuramoyl-L-alanine (UMA). In Limosilactobacillus fermentum (strain NBRC 3956 / LMG 18251) (Lactobacillus fermentum), this protein is UDP-N-acetylmuramoylalanine--D-glutamate ligase.